The chain runs to 249 residues: NADH dehydrogenase [ubiquinone] flavoprotein 2, mitochondrial (249 aa).

Residues 1–32 (MFFSAALRARAAGLTAHWGRHVRNLHKTAKQN) constitute a mitochondrion transit peptide. An N6-acetyllysine modification is found at lysine 61. [2Fe-2S] cluster is bound by residues cysteine 135, cysteine 140, cysteine 176, and cysteine 180. Tyrosine 193 bears the Phosphotyrosine; by SRC mark. The tract at residues 213–249 (IPKPGPRSGRFSCEPAGGLTSLTEPPKGPGFGVQAGL) is disordered.

The protein belongs to the complex I 24 kDa subunit family. In terms of assembly, core subunit of respiratory chain NADH dehydrogenase (Complex I) which is composed of 45 different subunits. This is a component of the flavoprotein-sulfur (FP) fragment of the enzyme. It depends on [2Fe-2S] cluster as a cofactor.

It is found in the mitochondrion inner membrane. It catalyses the reaction a ubiquinone + NADH + 5 H(+)(in) = a ubiquinol + NAD(+) + 4 H(+)(out). Its function is as follows. Core subunit of the mitochondrial membrane respiratory chain NADH dehydrogenase (Complex I) which catalyzes electron transfer from NADH through the respiratory chain, using ubiquinone as an electron acceptor. Parts of the peripheral arm of the enzyme, where the electrons from NADH are accepted by flavin mononucleotide (FMN) and then passed along a chain of iron-sulfur clusters by electron tunnelling to the final acceptor ubiquinone. Contains one iron-sulfur cluster. This chain is NADH dehydrogenase [ubiquinone] flavoprotein 2, mitochondrial, found in Pan troglodytes (Chimpanzee).